Here is a 684-residue protein sequence, read N- to C-terminus: Putative glucan endo-1,3-beta-glucosidase btgC (684 aa).

Residues 1 to 10 (MAGVNRSFSY) show a composition bias toward polar residues. Disordered regions lie at residues 1–38 (MAGV…LYST), 124–143 (AERD…APPD), and 157–182 (DSYS…TTPS). Residues 1–302 (MAGVNRSFSY…HIIGGGSRKR (302 aa)) are Cytoplasmic-facing. Positions 12–32 (RGDDALLRDDEREISPLRSAE) are enriched in basic and acidic residues. The helical; Signal-anchor for type II membrane protein transmembrane segment at 303-323 (GWIVGLILAAVIVAAIVGGAV) threads the bilayer. Residues 324 to 684 (GGILGHQEHD…IPDCGGKTIT (361 aa)) lie on the Extracellular side of the membrane. The interval 330-358 (QEHDGDTSSSSSSSSSSGTGSGGSDKGDG) is disordered. The segment covering 336-347 (TSSSSSSSSSSG) has biased composition (low complexity). N-linked (GlcNAc...) asparagine glycosylation is found at Asn-404, Asn-427, Asn-455, and Asn-474. Catalysis depends on Glu-487, which acts as the Proton donor. The active-site Nucleophile is Glu-586. Asn-631 is a glycosylation site (N-linked (GlcNAc...) asparagine).

Belongs to the glycosyl hydrolase 17 family.

The protein resides in the cell membrane. The catalysed reaction is Hydrolysis of (1-&gt;3)-beta-D-glucosidic linkages in (1-&gt;3)-beta-D-glucans.. Its function is as follows. Glucanases play a role in cell expansion during growth, in cell-cell fusion during mating, and in spore release during sporulation. This enzyme may be involved in beta-glucan degradation. Active on laminarin and lichenan. This is Putative glucan endo-1,3-beta-glucosidase btgC (btgC) from Aspergillus niger (strain ATCC MYA-4892 / CBS 513.88 / FGSC A1513).